The sequence spans 468 residues: Immunoglobulin superfamily member 21 (468 aa).

Residues 1 to 24 (MRAAPSLRRASCLLLAAILDLARG) form the signal peptide. 2 Ig-like domains span residues 25-132 (YLTV…VVLA) and 344-429 (PKIM…TRLI). Residues Cys46 and Cys116 are joined by a disulfide bond.

In terms of assembly, interacts (Ig-like 1 domain) with NRXN2 (via Laminin G-like 1 domain) in a trans-interaction manner. Expressed in brain.

The protein resides in the postsynaptic cell membrane. Its function is as follows. Involved in synaptic inhibition in the brain. Selectively regulates inhibitory presynaptic differentiation through interacting with presynaptic NRXN2. The polypeptide is Immunoglobulin superfamily member 21 (Rattus norvegicus (Rat)).